A 229-amino-acid polypeptide reads, in one-letter code: Large ribosomal subunit protein uL1 (229 aa).

The protein belongs to the universal ribosomal protein uL1 family. As to quaternary structure, part of the 50S ribosomal subunit.

In terms of biological role, binds directly to 23S rRNA. The L1 stalk is quite mobile in the ribosome, and is involved in E site tRNA release. Functionally, protein L1 is also a translational repressor protein, it controls the translation of the L11 operon by binding to its mRNA. The protein is Large ribosomal subunit protein uL1 of Actinobacillus succinogenes (strain ATCC 55618 / DSM 22257 / CCUG 43843 / 130Z).